We begin with the raw amino-acid sequence, 518 residues long: G-protein coupled receptor 161 (518 aa).

Residues 1–26 (MNSSSDGANEGAGAAADNGPTKVAES) lie on the Extracellular side of the membrane. N2 carries an N-linked (GlcNAc...) asparagine glycan. A helical membrane pass occupies residues 27 to 47 (IAIIIIDILICLGNLVIVVTL). Over 48–59 (YKKSYLLSLSNK) the chain is Cytoplasmic. Residues 60–80 (FVFSLTFSNLLLSMLVLPFVV) form a helical membrane-spanning segment. Over 81–97 (VSSILREWIFGVVWCNF) the chain is Extracellular. C95 and C173 are disulfide-bonded. N96 carries an N-linked (GlcNAc...) asparagine glycan. The helical transmembrane segment at 98-118 (SALLYMLISSASMLTLGIIAI) threads the bilayer. The Cytoplasmic segment spans residues 119 to 138 (DRYYAVLYPMVYPMKITGNR). A helical membrane pass occupies residues 139–159 (AVLALVYVWLHSLIGCLPPLF). Over 160-185 (GWSTLEFDHFKWMCVAAWHKEAGYTA) the chain is Extracellular. A helical membrane pass occupies residues 186–206 (FWQVWCALLPFIVMMICYGFI). Residues 207–264 (FRVARIKARKIHCGTVIIVQEASQKNGRKNSSTSTSSSGSRKNGFSSIVYSANQCKAL) are Cytoplasmic-facing. Residues 265–285 (ITILVVIGAFVLTWGPYMIVI) form a helical membrane-spanning segment. Over 286–301 (STEALKGKNSVSPVLE) the chain is Extracellular. Residues 302 to 322 (TLATWLSFTSAICHPLIYGLW) traverse the membrane as a helical segment. Residues 323 to 518 (NKTVRKELLG…GNIETSKCDV (196 aa)) lie on the Cytoplasmic side of the membrane. The segment at 429-448 (EVEQKNDARTMPTQPTAPSE) is disordered. Residues 439–448 (MPTQPTAPSE) are compositionally biased toward polar residues.

The protein belongs to the G-protein coupled receptor 1 family.

Its subcellular location is the cell projection. The protein localises to the cilium membrane. It is found in the cell membrane. Key negative regulator of Shh signaling during neural tube development. Recruited to primary cilia and acts as a regulator of the PKA-dependent basal repression machinery in Shh signaling by increasing cAMP levels, leading to promote the PKA-dependent processing of gli3 into gli3r and repress the Shh signaling. In presence of shh, it is removed from primary cilia, preventing its activity and allowing activation of the Shh signaling. In Xenopus tropicalis (Western clawed frog), this protein is G-protein coupled receptor 161 (gpr161).